A 1657-amino-acid chain; its full sequence is Alsin (1657 aa).

RCC1 repeat units follow at residues 60-109 (GEVY…VTDN), 110-168 (GVAY…LSIS), and 169-219 (REIW…LVQC). Positions 432–481 (TGAQAGSSAIGPEGLKDSREEQVKQESMQGKKSSSLVDIREEETEGGSRR) are disordered. A compositionally biased stretch (basic and acidic residues) spans 445–455 (GLKDSREEQVK). A compositionally biased stretch (polar residues) spans 456-467 (QESMQGKKSSSL). 4 positions are modified to phosphoserine: serine 465, serine 466, serine 483, and serine 492. Threonine 510 is subject to Phosphothreonine. RCC1 repeat units lie at residues 526-577 (TEVW…LTAK) and 578-628 (SQVY…LVDT). Residue lysine 533 is modified to N6-acetyllysine. The DH domain maps to 690-885 (GYIASLHELA…ECLALHLGRK (196 aa)). One can recognise a PH domain in the interval 901–1007 (GKMTDSLRKP…RAISQAVDQA (107 aa)). MORN repeat units lie at residues 1049 to 1071 (YDGR…DGKM), 1072 to 1094 (YSGM…NKAM), 1100 to 1122 (YVGH…SGEV), 1123 to 1145 (FEGC…KLTS), 1151 to 1173 (FIGQ…TRGE), 1175 to 1197 (YMGM…FGLY), 1198 to 1220 (YEGN…DDTI), and 1221 to 1244 (YEGE…NGDY). Serine 1335 is subject to Phosphoserine. A VPS9 domain is found at 1513-1657 (KQPDIALLGF…YYQIQREKLN (145 aa)).

In terms of assembly, forms a heteromeric complex with ALS2CL. Interacts with ALS2CL.

Functionally, may act as a GTPase regulator. Controls survival and growth of spinal motoneurons. The polypeptide is Alsin (ALS2) (Pan troglodytes (Chimpanzee)).